The chain runs to 262 residues: Adenosylcobinamide-GDP ribazoletransferase (262 aa).

Transmembrane regions (helical) follow at residues 4 to 26, 37 to 57, 59 to 79, 112 to 132, 139 to 159, 183 to 203, 205 to 225, and 237 to 257; these read AWNG…SIAW, CMPL…ALFS, FSFS…IWMA, VGAF…LFLY, IPPA…AWLL, AIWA…STAI, VQTG…AKPW, and VLGA…WLLH.

This sequence belongs to the CobS family. Mg(2+) serves as cofactor.

The protein localises to the cell membrane. It carries out the reaction alpha-ribazole + adenosylcob(III)inamide-GDP = adenosylcob(III)alamin + GMP + H(+). The catalysed reaction is alpha-ribazole 5'-phosphate + adenosylcob(III)inamide-GDP = adenosylcob(III)alamin 5'-phosphate + GMP + H(+). The protein operates within cofactor biosynthesis; adenosylcobalamin biosynthesis; adenosylcobalamin from cob(II)yrinate a,c-diamide: step 7/7. In terms of biological role, joins adenosylcobinamide-GDP and alpha-ribazole to generate adenosylcobalamin (Ado-cobalamin). Also synthesizes adenosylcobalamin 5'-phosphate from adenosylcobinamide-GDP and alpha-ribazole 5'-phosphate. In Geobacillus kaustophilus (strain HTA426), this protein is Adenosylcobinamide-GDP ribazoletransferase.